The sequence spans 479 residues: MNTILAQQIANEGGVEAWMIAQQHKSLLRFLTCGSVDDGKSTLIGRLLHDTLQIYEDQLSSLHNDSKRHGTQGEKLDLALLVDGLQAEREQGITIDVAYRYFSTEKRKFIIADTPGHEQYTRNMATGASTCDLAILLIDARKGVLDQTRRHSFISTLLGIKHLVVAINKMDLVDYREETFARIREDYLTFAEQLPGDLDIRFVPLSALEGDNVAAQSANMRWYSGPTLLEVLETVDIQRAVDRQPMRFPVQYVNRPNLDFRGYAGTLASGSVKVGERIKVLPSGVESSVARIVTFDGDKEEACAGEAITLVLNDDIDISRGDLLLAANETLAPARHAAIDVVWMAEQPLAPGQSYDVKLAGKKTRARIEAIRYQIDINNLTQRDVESLPLNGIGLVEMTFDEPLALDIYQQNPVTGGLIFIDRLSNVTVGAGMVRELDERGATPSVEYSAFELELNALVRRHFPHWDARDLLGDKHGAA.

Positions lysine 25 to arginine 239 constitute a tr-type G domain. Positions glycine 34–serine 41 are G1. Residue glycine 34–serine 41 participates in GTP binding. Residues glycine 92–aspartate 96 are G2. The G3 stretch occupies residues aspartate 113–glycine 116. Residues aspartate 113 to histidine 117 and asparagine 168 to aspartate 171 contribute to the GTP site. A G4 region spans residues asparagine 168–aspartate 171. The tract at residues serine 206 to leucine 208 is G5.

Belongs to the TRAFAC class translation factor GTPase superfamily. Classic translation factor GTPase family. CysN/NodQ subfamily. As to quaternary structure, heterodimer composed of CysD, the smaller subunit, and CysN.

It catalyses the reaction sulfate + ATP + H(+) = adenosine 5'-phosphosulfate + diphosphate. It participates in sulfur metabolism; hydrogen sulfide biosynthesis; sulfite from sulfate: step 1/3. Its function is as follows. With CysD forms the ATP sulfurylase (ATPS) that catalyzes the adenylation of sulfate producing adenosine 5'-phosphosulfate (APS) and diphosphate, the first enzymatic step in sulfur assimilation pathway. APS synthesis involves the formation of a high-energy phosphoric-sulfuric acid anhydride bond driven by GTP hydrolysis by CysN coupled to ATP hydrolysis by CysD. In Salmonella paratyphi B (strain ATCC BAA-1250 / SPB7), this protein is Sulfate adenylyltransferase subunit 1.